The primary structure comprises 623 residues: Kelch-like protein diablo (623 aa).

Residues 1–54 are disordered; the sequence is MGDLPGSGSTAQPRDAAVTGTGGNSTAGGGSSVGSTAVDRPPSPARLSHTSEKH. At Thr-19 the chain carries Phosphothreonine. Positions 20 to 32 are enriched in gly residues; sequence GTGGNSTAGGGSS. One can recognise a BTB domain in the interval 72-139; it reads CDVVLNVGGR…CYTAHIIVEE (68 aa). Positions 174 to 276 constitute a BACK domain; that stretch reads CLGIRAFADT…SPKFLVGTVG (103 aa). Kelch repeat units follow at residues 323 to 369, 371 to 417, 418 to 464, 466 to 511, 513 to 558, and 559 to 605; these read VLFA…VLND, LYAV…VLDE, FLYA…VLGG, LYAI…VFNN, IYAV…VVNG, and QLYA…VMRA.

The protein operates within protein modification; protein ubiquitination. Functionally, probable substrate-specific adapter of an E3 ubiquitin-protein ligase complex which mediates the ubiquitination and subsequent proteasomal degradation of target proteins. May have a role in synapse differentiation and growth. This is Kelch-like protein diablo from Drosophila simulans (Fruit fly).